Reading from the N-terminus, the 301-residue chain is Protease HtpX homolog (301 aa).

A run of 2 helical transmembrane segments spans residues 11–31 (VLLL…IAGA) and 34–54 (NSAF…YSYW). His138 contributes to the Zn(2+) binding site. Residue Glu139 is part of the active site. His142 lines the Zn(2+) pocket. 2 consecutive transmembrane segments (helical) span residues 154 to 174 (AAAV…AAIF) and 188 to 208 (LVGL…QLAI). A Zn(2+)-binding site is contributed by Glu213.

The protein belongs to the peptidase M48B family. It depends on Zn(2+) as a cofactor.

The protein localises to the cell membrane. This chain is Protease HtpX homolog, found in Kocuria rhizophila (strain ATCC 9341 / DSM 348 / NBRC 103217 / DC2201).